The sequence spans 233 residues: Cell surface glycoprotein gp42 (233 aa).

The N-terminal stretch at 1–16 (MLLWMVLLLCVSMTEA) is a signal peptide. Ig-like domains follow at residues 23–98 (PVLS…GTIQ) and 115–195 (PVLT…RDIS). N-linked (GlcNAc...) asparagine glycans are attached at residues N29, N66, and N181. 2 cysteine pairs are disulfide-bonded: C40/C88 and C136/C184. G206 carries the GPI-anchor amidated glycine lipid modification. A propeptide spans 207 to 233 (TASMKSTTVVIWLPVSCLVGWPWLLRF) (removed in mature form).

As to expression, NK cells.

The protein localises to the cell membrane. The sequence is that of Cell surface glycoprotein gp42 from Rattus norvegicus (Rat).